A 285-amino-acid chain; its full sequence is Probable endonuclease 4 (285 aa).

9 residues coordinate Zn(2+): H69, H109, E145, D179, H182, H216, D229, H231, and E261.

This sequence belongs to the AP endonuclease 2 family. Zn(2+) is required as a cofactor.

The enzyme catalyses Endonucleolytic cleavage to 5'-phosphooligonucleotide end-products.. Functionally, endonuclease IV plays a role in DNA repair. It cleaves phosphodiester bonds at apurinic or apyrimidinic (AP) sites, generating a 3'-hydroxyl group and a 5'-terminal sugar phosphate. The protein is Probable endonuclease 4 of Escherichia coli O127:H6 (strain E2348/69 / EPEC).